A 128-amino-acid chain; its full sequence is Large ribosomal subunit protein bL12 (128 aa).

It belongs to the bacterial ribosomal protein bL12 family. Homodimer. Part of the ribosomal stalk of the 50S ribosomal subunit. Forms a multimeric L10(L12)X complex, where L10 forms an elongated spine to which 2 to 4 L12 dimers bind in a sequential fashion. Binds GTP-bound translation factors.

Forms part of the ribosomal stalk which helps the ribosome interact with GTP-bound translation factors. Is thus essential for accurate translation. The chain is Large ribosomal subunit protein bL12 from Corynebacterium kroppenstedtii (strain DSM 44385 / JCM 11950 / CIP 105744 / CCUG 35717).